Consider the following 334-residue polypeptide: Chitinase 9 (334 aa).

The signal sequence occupies residues 1 to 23 (MKATTTAVALLVAAAAMAAQVVA). Positions 24-64 (EQCGSQAGGALCPNCLCCSSYGWCGSTSDYCGDGCQSQCDG) constitute a Chitin-binding type-1 domain. Intrachain disulfides connect Cys26-Cys41, Cys35-Cys47, Cys38-Cys65, Cys40-Cys54, Cys58-Cys62, Cys107-Cys169, Cys181-Cys189, and Cys288-Cys320. Glu151 acts as the Proton donor in catalysis.

The protein belongs to the glycosyl hydrolase 19 family. Chitinase class I subfamily. Expressed at high levels in roots, sheaths and meristems.

The catalysed reaction is Random endo-hydrolysis of N-acetyl-beta-D-glucosaminide (1-&gt;4)-beta-linkages in chitin and chitodextrins.. Functionally, may play a role in defense against fungal pathogens containing chitin. This Oryza sativa subsp. japonica (Rice) protein is Chitinase 9 (Cht9).